Here is a 144-residue protein sequence, read N- to C-terminus: Large ribosomal subunit protein uL15 (144 aa).

The interval 1–58 (MQLNDLRSAPGARREKLRPGRGIGSGLGKTGGRGHKGQTSRSGGKIAPGFEGGQQPLH) is disordered. The span at 21 to 31 (RGIGSGLGKTG) shows a compositional bias: gly residues.

This sequence belongs to the universal ribosomal protein uL15 family. In terms of assembly, part of the 50S ribosomal subunit.

Binds to the 23S rRNA. The protein is Large ribosomal subunit protein uL15 of Azotobacter vinelandii (strain DJ / ATCC BAA-1303).